Consider the following 1645-residue polypeptide: Thrombospondin type-1 domain-containing protein 7A (1645 aa).

An N-terminal signal peptide occupies residues 1 to 38; that stretch reads MGLRAGRLASPSRGVLQLLRLPLLLLLLLSSGARGAAA. Residues 39-1595 lie on the Extracellular side of the membrane; that stretch reads QGDTEVPTLY…FGPDGRLKTW (1557 aa). TSP type-1 domains are found at residues 46–105, 109–181, and 183–236; these read TLYL…KVCD, ELYD…IPCQ, and DCIV…NPCE. The N-linked (GlcNAc...) asparagine glycan is linked to Asn223. Residues 255–300 are disordered; that stretch reads PHTRQARQARRRGKNKEREKERGKAVKDPEARELIKKKRNRNRQNR. Positions 256-304 form a coiled coil; that stretch reads HTRQARQARRRGKNKEREKERGKAVKDPEARELIKKKRNRNRQNRQENR. Basic residues predominate over residues 258-269; it reads RQARQARRRGKN. The segment covering 270-288 has biased composition (basic and acidic residues); it reads KEREKERGKAVKDPEAREL. Residues 289–298 show a composition bias toward basic residues; the sequence is IKKKRNRNRQ. Asn321 is a glycosylation site (N-linked (GlcNAc...) asparagine). TSP type-1 domains are found at residues 349–405, 412–499, 501–563, 623–684, 685–758, 760–820, 821–893, 895–948, 949–1022, 1024–1084, 1085–1152, 1154–1208, 1209–1272, 1274–1329, 1330–1400, and 1402–1463; these read ECQV…VSQG, ATYG…VPCP, ECEV…PSCY, DCVL…HPCT, VYHW…LPCR, DCVV…PTCH, SYRW…IPCQ, DCQF…CPCD, KYNA…IPCP, DCKL…SDCN, QYIW…LPCP, DCVI…KNCY, HYDY…VECP, NCQL…KPCY, RWQY…QPCP, and DCYL…GQCY. Cystine bridges form between Cys424-Cys494, Cys444-Cys498, and Cys455-Cys483. Asn439 carries an N-linked (GlcNAc...) asparagine glycan. Asn489 carries an N-linked (GlcNAc...) asparagine glycan. 2 disulfide bridges follow: Cys624–Cys666 and Cys635–Cys639. An N-linked (GlcNAc...) asparagine glycan is attached at Asn668. 7 cysteine pairs are disulfide-bonded: Cys678-Cys683, Cys696-Cys753, Cys717-Cys757, Cys728-Cys741, Cys761-Cys803, Cys772-Cys776, and Cys813-Cys819. Asn706 carries an N-linked (GlcNAc...) asparagine glycan. A glycan (N-linked (GlcNAc...) asparagine) is linked at Asn957. 6 cysteine pairs are disulfide-bonded: Cys961–Cys1017, Cys983–Cys1021, Cys994–Cys1007, Cys1025–Cys1062, Cys1036–Cys1040, and Cys1079–Cys1083. An N-linked (GlcNAc...) asparagine glycan is attached at Asn1032. The cysteines at positions 1201 and 1207 are disulfide-linked. Asn1213 is a glycosylation site (N-linked (GlcNAc...) asparagine). 12 disulfide bridges follow: Cys1220-Cys1267, Cys1228-Cys1271, Cys1239-Cys1252, Cys1275-Cys1313, Cys1286-Cys1290, Cys1323-Cys1328, Cys1339-Cys1395, Cys1346-Cys1399, Cys1357-Cys1376, Cys1403-Cys1447, Cys1414-Cys1418, and Cys1457-Cys1462. An N-linked (GlcNAc...) asparagine glycan is attached at Asn1264. A glycan (N-linked (GlcNAc...) asparagine) is linked at Asn1354. Residues Asn1488 and Asn1535 are each glycosylated (N-linked (GlcNAc...) asparagine). Residues 1596–1616 form a helical membrane-spanning segment; that stretch reads VYGVAAGAFVLLVFIVSMIYL. The Cytoplasmic portion of the chain corresponds to 1617-1645; it reads ACKKPKKPQRRQNNRLKPLTLAYDGDADM.

Post-translationally, proteolytic cleavage in the extracellular region generates a 210 kDa soluble form. Extensively N-glycosylated. In terms of tissue distribution, detected on kidney podocytes along the glomerular capillary wall (at protein level).

Its subcellular location is the cell membrane. It is found in the cell projection. It localises to the secreted. In terms of biological role, plays a role in actin cytoskeleton rearrangement. Functionally, the soluble form promotes endothelial cell migration and filopodia formation during sprouting angiogenesis via a FAK-dependent mechanism. In Mus musculus (Mouse), this protein is Thrombospondin type-1 domain-containing protein 7A (Thsd7a).